The following is a 64-amino-acid chain: Large ribosomal subunit protein bL33c (64 aa).

This sequence belongs to the bacterial ribosomal protein bL33 family.

The protein resides in the plastid. It localises to the chloroplast. In Thalassiosira pseudonana (Marine diatom), this protein is Large ribosomal subunit protein bL33c.